We begin with the raw amino-acid sequence, 270 residues long: MSDLHNESIFITGGGSGLGLALVERFIEEGAQVATLELSAAKVASLRQRFGEHILAVEGNVTCYADYQRAVDQILTRSGKLDCFIGNAGIWDHNASLVNTPAETLETGFHELFNVNVLGYLLGAKACAPALIASEGSMIFTLSNAARYPGGGGPLYTASKHAATGLIRQLAYELAPKVRVNGVGPCGMASDLRGPQALGQSETSIMQSLTPEKIAAILPLQFFPQPADFTGPYVMLASRRNNRALSGVMINADAGLAIRGIRHVAAGLDL.

10-34 contributes to the NAD(+) binding site; it reads FITGGGSGLGLALVERFIEEGAQVA. Residue S143 coordinates substrate. The Proton acceptor role is filled by Y156.

The protein belongs to the short-chain dehydrogenases/reductases (SDR) family.

It carries out the reaction 3-(cis-5,6-dihydroxycyclohexa-1,3-dien-1-yl)propanoate + NAD(+) = 3-(2,3-dihydroxyphenyl)propanoate + NADH + H(+). It catalyses the reaction (2E)-3-(cis-5,6-dihydroxycyclohexa-1,3-dien-1-yl)prop-2-enoate + NAD(+) = (2E)-3-(2,3-dihydroxyphenyl)prop-2-enoate + NADH + H(+). The protein operates within aromatic compound metabolism; 3-phenylpropanoate degradation. In terms of biological role, converts 3-phenylpropionate-dihydrodiol (PP-dihydrodiol) and cinnamic acid-dihydrodiol (CI-dihydrodiol) into 3-(2,3-dihydroxylphenyl)propanoic acid (DHPP) and 2,3-dihydroxicinnamic acid (DHCI), respectively. In Shigella sonnei (strain Ss046), this protein is 3-phenylpropionate-dihydrodiol/cinnamic acid-dihydrodiol dehydrogenase.